Consider the following 151-residue polypeptide: Prefoldin subunit alpha (151 aa).

Belongs to the prefoldin subunit alpha family. As to quaternary structure, heterohexamer of two alpha and four beta subunits.

It localises to the cytoplasm. Molecular chaperone capable of stabilizing a range of proteins. Seems to fulfill an ATP-independent, HSP70-like function in archaeal de novo protein folding. The sequence is that of Prefoldin subunit alpha (pfdA) from Aeropyrum pernix (strain ATCC 700893 / DSM 11879 / JCM 9820 / NBRC 100138 / K1).